A 311-amino-acid polypeptide reads, in one-letter code: tRNA-cytidine(32) 2-sulfurtransferase (311 aa).

The short motif at 47–52 (SGGKDS) is the PP-loop motif element. [4Fe-4S] cluster contacts are provided by C122, C125, and C213.

Belongs to the TtcA family. Homodimer. Mg(2+) serves as cofactor. It depends on [4Fe-4S] cluster as a cofactor.

It localises to the cytoplasm. It carries out the reaction cytidine(32) in tRNA + S-sulfanyl-L-cysteinyl-[cysteine desulfurase] + AH2 + ATP = 2-thiocytidine(32) in tRNA + L-cysteinyl-[cysteine desulfurase] + A + AMP + diphosphate + H(+). It functions in the pathway tRNA modification. Functionally, catalyzes the ATP-dependent 2-thiolation of cytidine in position 32 of tRNA, to form 2-thiocytidine (s(2)C32). The sulfur atoms are provided by the cysteine/cysteine desulfurase (IscS) system. This Klebsiella pneumoniae (strain 342) protein is tRNA-cytidine(32) 2-sulfurtransferase.